A 352-amino-acid polypeptide reads, in one-letter code: S-adenosylmethionine:tRNA ribosyltransferase-isomerase (352 aa).

Belongs to the QueA family. Monomer.

Its subcellular location is the cytoplasm. The enzyme catalyses 7-aminomethyl-7-carbaguanosine(34) in tRNA + S-adenosyl-L-methionine = epoxyqueuosine(34) in tRNA + adenine + L-methionine + 2 H(+). The protein operates within tRNA modification; tRNA-queuosine biosynthesis. Functionally, transfers and isomerizes the ribose moiety from AdoMet to the 7-aminomethyl group of 7-deazaguanine (preQ1-tRNA) to give epoxyqueuosine (oQ-tRNA). This is S-adenosylmethionine:tRNA ribosyltransferase-isomerase from Vibrio cholerae serotype O1 (strain ATCC 39315 / El Tor Inaba N16961).